The following is a 93-amino-acid chain: Ferredoxin-2 (93 aa).

In terms of domain architecture, 2Fe-2S ferredoxin-type spans 2–91; sequence YKVTLKTPDG…DVVIETHKED (90 aa). [2Fe-2S] cluster-binding residues include Cys-37, Cys-42, Cys-45, and Cys-75.

Belongs to the 2Fe2S plant-type ferredoxin family. The cofactor is [2Fe-2S] cluster.

The protein localises to the plastid. Its subcellular location is the chloroplast. In terms of biological role, ferredoxins are iron-sulfur proteins that transfer electrons in a wide variety of metabolic reactions. The sequence is that of Ferredoxin-2 from Equisetum telmateia (Great horsetail).